Reading from the N-terminus, the 473-residue chain is MKRASAGGSRLLAWVLWLQAWQVAAPCPGACVCYNEPKVTTSCPQQGLQAVPVGIPAASQRIFLHGNRISHVPAASFRACRNLTILWLHSNVLARIDAAAFTGLALLEQLDLSDNAQLRSVDPATFHGLGRLHTLHLDRCGLQELGPGLFRGLAALQYLYLQDNALQALPDDTFRDLGNLTHLFLHGNRISSVPERAFRGLHSLDRLLLHQNRVAHVHPHAFRDLGRLMTLYLFANNLSALPTEALAPLRALQYLRLNDNPWVCDCRARPLWAWLQKFRGSSSEVPCSLPQRLAGRDLKRLAANDLQGCAVATGPYHPIWTGRATDEEPLGLPKCCQPDAADKASVLEPGRPASAGNALKGRVPPGDSPPGNGSGPRHINDSPFGTLPGSAEPPLTAVRPEGSEPPGFPTSGPRRRPGCSRKNRTRSHCRLGQAGSGGGGTGDSEGSGALPSLTCSLTPLGLALVLWTVLGPC.

Residues 1 to 26 form the signal peptide; sequence MKRASAGGSRLLAWVLWLQAWQVAAP. 2 disulfide bridges follow: C27-C33 and C31-C43. The LRRNT domain occupies 27 to 54; that stretch reads CPGACVCYNEPKVTTSCPQQGLQAVPVG. 9 LRR repeats span residues 55–79, 81–103, 104–128, 129–152, 153–176, 178–200, 202–224, 225–248, and 250–273; these read IPAA…SFRA, RNLT…AFTG, LALL…TFHG, LGRL…LFRG, LAAL…TFRD, GNLT…AFRG, HSLD…AFRD, LGRL…ALAP, and RALQ…PLWA. Residue N82 is glycosylated (N-linked (GlcNAc...) asparagine). A glycan (N-linked (GlcNAc...) asparagine) is linked at N179. One can recognise an LRRCT domain in the interval 260-310; sequence NPWVCDCRARPLWAWLQKFRGSSSEVPCSLPQRLAGRDLKRLAANDLQGCA. 3 disulfide bridges follow: C264–C287, C266–C335, and C309–C336. Positions 346-447 are disordered; that stretch reads VLEPGRPASA…GGGTGDSEGS (102 aa). Over residues 413 to 429 the composition is skewed to basic residues; sequence PRRRPGCSRKNRTRSHC. Gly residues predominate over residues 434-445; the sequence is AGSGGGGTGDSE. S447 carries the GPI-anchor amidated serine lipid modification. Residues 448–473 constitute a propeptide, removed in mature form; it reads GALPSLTCSLTPLGLALVLWTVLGPC.

This sequence belongs to the Nogo receptor family. As to quaternary structure, homodimer. Interacts with MAG. Interacts with RTN4. Interacts with NGFR. Interacts with LINGO1. Interacts with KIAA0319L. Interacts with OLFM1; this inhibits interaction with LINGO1 and NGFR. Interacts with OMG. In terms of processing, N-glycosylated. O-glycosylated. Contains terminal sialic acid groups on its glycan chains. Widespread in the brain but highest levels in the gray matter. Low levels in heart and kidney; not expressed in oligodendrocytes (white matter).

Its subcellular location is the cell membrane. It is found in the membrane raft. The protein localises to the cell projection. It localises to the dendrite. The protein resides in the axon. Its subcellular location is the perikaryon. Receptor for RTN4, OMG and MAG. Functions as a receptor for the sialylated gangliosides GT1b and GM1. Besides, functions as a receptor for chondroitin sulfate proteoglycans. Can also bind heparin. Intracellular signaling cascades are triggered via the coreceptor NGFR. Signaling mediates activation of Rho and downstream reorganization of the actin cytoskeleton. Mediates axonal growth inhibition. Plays a role in regulating axon regeneration and neuronal plasticity in the adult central nervous system. Plays a role in postnatal brain development. Required for normal axon migration across the brain midline and normal formation of the corpus callosum. Protects motoneurons against apoptosis; protection against apoptosis is probably mediated via interaction with MAG. Acts in conjunction with RTN4 and LINGO1 in regulating neuronal precursor cell motility during cortical development. Like other family members, plays a role in restricting the number dendritic spines and the number of synapses that are formed during brain development. The chain is Reticulon-4 receptor (RTN4R) from Homo sapiens (Human).